The sequence spans 327 residues: MSKVVVCAMYKFVTLAEFEKLQSPLQKVMETSGVKGSLLLAQEGINGTVAGSQSAIDNLLAWLATQPGLDNIVYKLSFDDVMPFYRTKVKLKKEIVTMGVEGIDPKKVVGTYVKPKDWNQLISDPEVLLVDTRNDYEVQIGTFKDALDPKTKTFREFPDYVKQNLDPAKHKKVAMFCTGGIRCEKSTAYLKEQGFDEVFHLEGGILKYLEEVKLEESLWQGECFVFDNRVAVDHNLEKGQYAQCNACRMPITADEMALDSFVQGVSCLHCIDNISEKQRQRFIERERQVQLSKLRGEAHIGSDVSQVIQTRRAKKDRLKKAQHDKSA.

A Rhodanese domain is found at S123–S217. The active-site Cysteine persulfide intermediate is C177.

This sequence belongs to the TrhO family.

It catalyses the reaction uridine(34) in tRNA + AH2 + O2 = 5-hydroxyuridine(34) in tRNA + A + H2O. Catalyzes oxygen-dependent 5-hydroxyuridine (ho5U) modification at position 34 in tRNAs. The protein is tRNA uridine(34) hydroxylase of Shewanella pealeana (strain ATCC 700345 / ANG-SQ1).